We begin with the raw amino-acid sequence, 847 residues long: Protein HIR2 (847 aa).

5 WD repeats span residues 10–46 (LHDG…NAAT), 113–153 (KDNE…LKSS), 155–194 (ELKS…TTKL), 259–305 (KFSP…PLFD), and 309–348 (VVNS…LGDV). The tract at residues 368–399 (PFKPKAEEPDTKLPPNKTAQQTTTNSKKQPKA) is disordered. Positions 384–394 (KTAQQTTTNSK) are enriched in polar residues. WD repeat units lie at residues 508–548 (RKDN…IYVT) and 558–597 (PMLL…IAFP).

The protein belongs to the WD repeat HIR1 family.

It localises to the nucleus. In terms of biological role, required for replication-independent chromatin assembly and for the periodic repression of histone gene transcription during the cell cycle. In Kluyveromyces lactis (strain ATCC 8585 / CBS 2359 / DSM 70799 / NBRC 1267 / NRRL Y-1140 / WM37) (Yeast), this protein is Protein HIR2 (HIR2).